Consider the following 70-residue polypeptide: Basic phospholipase A2 2 (70 aa).

Cysteine 28 and cysteine 44 are oxidised to a cystine. Histidine 47 is an active-site residue. Aspartate 48 contacts Ca(2+).

Belongs to the phospholipase A2 family. Group II subfamily. D49 sub-subfamily. Ca(2+) serves as cofactor. As to expression, expressed by the venom gland.

The protein localises to the secreted. It carries out the reaction a 1,2-diacyl-sn-glycero-3-phosphocholine + H2O = a 1-acyl-sn-glycero-3-phosphocholine + a fatty acid + H(+). Functionally, snake venom phospholipase A2 (PLA2) that exhibits strong myotoxicity. PLA2 catalyzes the calcium-dependent hydrolysis of the 2-acyl groups in 3-sn-phosphoglycerides. This is Basic phospholipase A2 2 from Trimeresurus stejnegeri (Chinese green tree viper).